The chain runs to 182 residues: Large ribosomal subunit protein uL16 (182 aa).

It belongs to the universal ribosomal protein uL16 family.

The sequence is that of Large ribosomal subunit protein uL16 from Thermococcus onnurineus (strain NA1).